A 476-amino-acid chain; its full sequence is 3-isopropylmalate dehydratase large subunit (476 aa).

[4Fe-4S] cluster is bound by residues Cys-353, Cys-413, and Cys-416.

It belongs to the aconitase/IPM isomerase family. LeuC type 1 subfamily. As to quaternary structure, heterodimer of LeuC and LeuD. The cofactor is [4Fe-4S] cluster.

It catalyses the reaction (2R,3S)-3-isopropylmalate = (2S)-2-isopropylmalate. It participates in amino-acid biosynthesis; L-leucine biosynthesis; L-leucine from 3-methyl-2-oxobutanoate: step 2/4. Catalyzes the isomerization between 2-isopropylmalate and 3-isopropylmalate, via the formation of 2-isopropylmaleate. This chain is 3-isopropylmalate dehydratase large subunit, found in Yersinia enterocolitica serotype O:8 / biotype 1B (strain NCTC 13174 / 8081).